Reading from the N-terminus, the 137-residue chain is Large ribosomal subunit protein uL16 (137 aa).

The protein belongs to the universal ribosomal protein uL16 family. In terms of assembly, part of the 50S ribosomal subunit.

Functionally, binds 23S rRNA and is also seen to make contacts with the A and possibly P site tRNAs. This Streptococcus uberis (strain ATCC BAA-854 / 0140J) protein is Large ribosomal subunit protein uL16.